Consider the following 288-residue polypeptide: NAD(P)H-hydrate epimerase (288 aa).

The transit peptide at 1 to 59 directs the protein to the mitochondrion; that stretch reads MSGLRALLGLGLPVAGSRLPRVRVQAGACRARPTWWGPQRLISGGRGDVEGMASSAVKY. A YjeF N-terminal domain is found at 65-275; it reads AQAVDQELFN…ALEKKYQLNL (211 aa). 119-123 lines the (6S)-NADPHX pocket; sequence NNGGD. N120 is a binding site for K(+). An N6-succinyllysine modification is found at K144. D185 contributes to the K(+) binding site. (6S)-NADPHX-binding positions include 189 to 195 and D218; that span reads GFSFKGE. S221 contributes to the K(+) binding site.

It belongs to the NnrE/AIBP family. Homodimer. Interacts with APOA1 and APOA2. K(+) serves as cofactor. In terms of processing, undergoes physiological phosphorylation during sperm capacitation, downstream to PKA activation.

It is found in the mitochondrion. The protein localises to the secreted. The enzyme catalyses (6R)-NADHX = (6S)-NADHX. It catalyses the reaction (6R)-NADPHX = (6S)-NADPHX. Functionally, catalyzes the epimerization of the S- and R-forms of NAD(P)HX, a damaged form of NAD(P)H that is a result of enzymatic or heat-dependent hydration. This is a prerequisite for the S-specific NAD(P)H-hydrate dehydratase to allow the repair of both epimers of NAD(P)HX. Accelerates cholesterol efflux from endothelial cells to high-density lipoprotein (HDL) and thereby regulates angiogenesis. The protein is NAD(P)H-hydrate epimerase of Sus scrofa (Pig).